Reading from the N-terminus, the 208-residue chain is UPF0637 protein BCQ_3749 (208 aa).

This sequence belongs to the UPF0637 family.

This Bacillus cereus (strain Q1) protein is UPF0637 protein BCQ_3749.